The following is a 387-amino-acid chain: N6-succino-2-amino-2'-deoxyadenylate synthase (387 aa).

Residue S14 is the Proton acceptor of the active site. ATP contacts are provided by S14, T15, G16, K17, and G18. A dGMP-binding site is contributed by S14. S14 serves as a coordination point for Mg(2+). N40 is a binding site for dGMP. Residues G42, H43, and T44 each contribute to the ATP site. G42 serves as a coordination point for Mg(2+). DGMP contacts are provided by S125, T126, and R140. Q207 serves as a coordination point for ATP. T222 lines the dGMP pocket. Position 293 (T293) interacts with Mg(2+). Residues T293, V294, and R299 each contribute to the L-aspartate site. ATP-binding residues include N324 and N327.

Belongs to the Caudovirales PurZ family. It depends on Mg(2+) as a cofactor.

The enzyme catalyses dGMP + L-aspartate + ATP = (2S)-2-amino-2'-deoxyadenylo-succinate + ADP + phosphate + 2 H(+). Its pathway is purine metabolism. Its function is as follows. Involved in the synthesis of the atypical nucleotide dZTP (2-amino-2'-deoxyadenosine-5'-triphosphate). Catalyzes the condensation of aspartate with deoxyguanylate into dSMP (N6-succino-2-amino-2'-deoxyadenylate), which undergoes defumarylation and phosphorylation respectively by host PurB and guanylate/nucleoside diphosphate kinases to give dZTP. dZTP is integrated into the viral genome instead of adenine by the viral DNA polymerase. This Z-base probably completely replaces adenosine and forms a triple bond to the opposite T-base. The resulting non-standard viral DNA is called Z-genome. The chemically modified DNA is probably harder for the host bacteria to digest with nucleases or restriction enzymes. The protein is N6-succino-2-amino-2'-deoxyadenylate synthase of Acinetobacter phage SH-Ab 15497.